The following is a 564-amino-acid chain: Potassium-transporting ATPase potassium-binding subunit (564 aa).

Helical transmembrane passes span 4–24 (YDFA…PWLG), 67–87 (TLAL…VLLL), 135–155 (LGLT…LVVL), 179–199 (LYGL…QGVP), 258–278 (FEVA…GHYV), 286–306 (AILA…LWSE), 382–402 (AGLY…GLMI), 420–440 (LLVA…AIAA), 487–507 (LMIG…ILAL), and 533–553 (GLLL…TLAL).

This sequence belongs to the KdpA family. The system is composed of three essential subunits: KdpA, KdpB and KdpC.

The protein resides in the cell inner membrane. Functionally, part of the high-affinity ATP-driven potassium transport (or Kdp) system, which catalyzes the hydrolysis of ATP coupled with the electrogenic transport of potassium into the cytoplasm. This subunit binds the periplasmic potassium ions and delivers the ions to the membrane domain of KdpB through an intramembrane tunnel. The polypeptide is Potassium-transporting ATPase potassium-binding subunit (Pseudomonas putida (strain ATCC 47054 / DSM 6125 / CFBP 8728 / NCIMB 11950 / KT2440)).